Consider the following 64-residue polypeptide: Alpha-conotoxin CnIC (64 aa).

The signal sequence occupies residues 1-21 (MGMRMMFTVFLLVVLTTTVVS). Residues 22–47 (FPSDSASDVRDDEAKDERSDMYKSKR) constitute a propeptide that is removed on maturation. Asn-48 carries the post-translational modification Deamidated asparagine; in CnIH; partial. 2 disulfide bridges follow: Cys-51–Cys-56 and Cys-52–Cys-62. Position 62 is a cysteine amide (Cys-62).

Belongs to the conotoxin A superfamily. As to expression, expressed by the venom duct.

The protein localises to the secreted. Alpha-conotoxins act on postsynaptic membranes, they bind to the nicotinic acetylcholine receptors (nAChR) and thus inhibit them. This is Alpha-conotoxin CnIC from Conus consors (Singed cone).